A 767-amino-acid polypeptide reads, in one-letter code: MVQSSVLGFPRIGGQRELKKITEAYWSGKATVEELLAKGKELREHNWKLQQKAGVDIIPSNDFSYYDQVLDLSLLFNAIPERYTKFDLAPIDVLFAMGRGLQKKATETQAAVDVTALEMVKWFDSNYHYVRPTFSHSTEFKLNTAAGIKPVDEFNEAKALGVQTRPVILGPVSYLYLGKADKDSLDLEPISLLPKILPVYKELLQKLKEAGAEQVQIDEPVLVLDLPEAVQSKFKEAYDALVGADVPELILTTYFGDVRPNLKAIENLPVAGFHFDFVRVPEQLDEVASILKDGQTLSAGVVDGRNIWKTDFAKASAVVQKAIEKVGKDKVVVATSSSLLHTPVDLESETKLDAVIKDWFSFATQKLDEVVVIAKNVSGEDVSKQLEANAASIKARSESSITNDPKVQERLTTINEALATRKAAFPERLTEQKAKYNLPLFPTTTIGSFPQTKDIRINRNKFAKGQITAEEYEAFINKEIETVVRFQEEIGLDVLVHGEPERNDMVQYFGEQLNGFAFTTNGWVQSYGSRYVRPPIIVGDVSRPKAMTVKESVYAQSITSKPMKGMLTGPVTILRWSFPRDDVSGKIQALQLGLALRDEVNDLEGAGITVIQVDEPAIREGLPLRAGKERSDYLNWAAQSFRVATSGVENSTQIHSHFCYSDLDPNHIKALDADVVSIEFSKKDDPNYIQEFSEYPNHIGLGLFDIHSPRIPSKQEFVSRIEEILKVYPASKFWVNPDCGLKTRGWPEVKESLTNMVEAAKEFRAKY.

5-methyltetrahydropteroyltri-L-glutamate contacts are provided by K19 and N126. L-homocysteine-binding positions include 446-448 (IGS) and E499. L-methionine is bound by residues 446–448 (IGS) and E499. Residues D504, Y527, 530 to 531 (RY), and W576 each bind 5-methyltetrahydropteroyltri-L-glutamate. D614 is an L-homocysteine binding site. An L-methionine-binding site is contributed by D614. 3 residues coordinate Zn(2+): H657, C659, and E679. The active-site Proton donor is the H707. C739 contributes to the Zn(2+) binding site.

The protein belongs to the vitamin-B12 independent methionine synthase family. Zn(2+) is required as a cofactor.

It catalyses the reaction 5-methyltetrahydropteroyltri-L-glutamate + L-homocysteine = tetrahydropteroyltri-L-glutamate + L-methionine. It participates in amino-acid biosynthesis; L-methionine biosynthesis via de novo pathway; L-methionine from L-homocysteine (MetE route): step 1/1. Its activity is regulated as follows. Inhibited weakly by methotrexate. Its function is as follows. Catalyzes the transfer of a methyl group from 5-methyltetrahydrofolate to homocysteine resulting in methionine formation. This Candida albicans (strain SC5314 / ATCC MYA-2876) (Yeast) protein is 5-methyltetrahydropteroyltriglutamate--homocysteine methyltransferase.